The following is a 294-amino-acid chain: 2-methoxy-6-polyprenyl-1,4-benzoquinol methylase, mitochondrial (294 aa).

A mitochondrion-targeting transit peptide spans 1–10; it reads MALRSAAGRL. Residues threonine 100, aspartate 136, and 166 to 167 contribute to the S-adenosyl-L-methionine site; that span reads DA.

Belongs to the class I-like SAM-binding methyltransferase superfamily. MenG/UbiE family. In terms of assembly, component of a multi-subunit COQ enzyme complex.

The protein resides in the mitochondrion inner membrane. The enzyme catalyses a 2-methoxy-6-(all-trans-polyprenyl)benzene-1,4-diol + S-adenosyl-L-methionine = a 5-methoxy-2-methyl-3-(all-trans-polyprenyl)benzene-1,4-diol + S-adenosyl-L-homocysteine + H(+). The protein operates within cofactor biosynthesis; ubiquinone biosynthesis. Functionally, methyltransferase required for the conversion of 2-polyprenyl-6-methoxy-1,4-benzoquinol (DDMQH2) to 2-polyprenyl-3-methyl-6-methoxy-1,4-benzoquinol (DMQH2). The protein is 2-methoxy-6-polyprenyl-1,4-benzoquinol methylase, mitochondrial of Oryza sativa subsp. japonica (Rice).